A 477-amino-acid polypeptide reads, in one-letter code: ATP synthase subunit beta (477 aa).

155–162 (GGAGVGKT) is an ATP binding site.

It belongs to the ATPase alpha/beta chains family. In terms of assembly, F-type ATPases have 2 components, CF(1) - the catalytic core - and CF(0) - the membrane proton channel. CF(1) has five subunits: alpha(3), beta(3), gamma(1), delta(1), epsilon(1). CF(0) has three main subunits: a(1), b(2) and c(9-12). The alpha and beta chains form an alternating ring which encloses part of the gamma chain. CF(1) is attached to CF(0) by a central stalk formed by the gamma and epsilon chains, while a peripheral stalk is formed by the delta and b chains.

The protein resides in the cell inner membrane. The enzyme catalyses ATP + H2O + 4 H(+)(in) = ADP + phosphate + 5 H(+)(out). Its function is as follows. Produces ATP from ADP in the presence of a proton gradient across the membrane. The catalytic sites are hosted primarily by the beta subunits. The sequence is that of ATP synthase subunit beta from Mesorhizobium japonicum (strain LMG 29417 / CECT 9101 / MAFF 303099) (Mesorhizobium loti (strain MAFF 303099)).